Here is an 80-residue protein sequence, read N- to C-terminus: FXYD domain-containing ion transport regulator 7 (80 aa).

At 1-22 (MATPTQSPTNVPEETDPFFYDY) the chain is on the extracellular side. O-linked (GlcNAc) threonine glycosylation is found at Thr3, Thr5, and Thr9. A helical transmembrane segment spans residues 23–45 (ATVQTVGMTLATIMFVLGIIIIL). The Cytoplasmic segment spans residues 46–80 (SKKVKCRKADSRSESPTCKSCKSELPSSAPGGGGV). The segment at 55 to 80 (DSRSESPTCKSCKSELPSSAPGGGGV) is disordered. Phosphoserine is present on Ser73.

The protein belongs to the FXYD family. In terms of assembly, regulatory subunit of the sodium/potassium-transporting ATPase which is composed of a catalytic alpha subunit, a non-catalytic beta subunit and an additional regulatory subunit. The regulatory subunit, a member of the FXYD protein family, modulates the enzymatic activity in a tissue- and isoform-specific way by changing affinities of the Na+/K+-ATPase toward Na(+), K(+) or ATP. Post-translationally, O-glycosylated; required for stabilization and translocation to the plasma membrane.

Its subcellular location is the cell membrane. Associates with and regulates the activity of the sodium/potassium-transporting ATPase (NKA) which catalyzes the hydrolysis of ATP coupled with the exchange of Na(+) and K(+) ions across the plasma membrane. Reduces the apparent affinity for external K(+), an effect that depends on the presence of external Na(+) and voltage. Increases the apparent affinity for intracellular Na(+). The chain is FXYD domain-containing ion transport regulator 7 (Fxyd7) from Mus musculus (Mouse).